A 201-amino-acid polypeptide reads, in one-letter code: MFAFLRGELVTVSREEAVVEVSGIGYLLHISSGTSRRLPPEGSQVRLFTHHYVREDAQQLFGFLDEEELQLFRLLLTIGGVGPKLAMAVLSGLSVGEIQEAIVANRPETLYGITGVGKKTASRIILELRDKILKIQPAASGKTAGAPQALQLNEDALAALMTLGFPKPAAQKAISGILETSPGLSVEEVVRAALIAIHNNF.

Residues 1 to 64 (MFAFLRGELV…EDAQQLFGFL (64 aa)) are domain I. The tract at residues 65 to 143 (DEEELQLFRL…KIQPAASGKT (79 aa)) is domain II. The tract at residues 144-154 (AGAPQALQLNE) is flexible linker. Residues 154-201 (EDALAALMTLGFPKPAAQKAISGILETSPGLSVEEVVRAALIAIHNNF) form a domain III region.

This sequence belongs to the RuvA family. In terms of assembly, homotetramer. Forms an RuvA(8)-RuvB(12)-Holliday junction (HJ) complex. HJ DNA is sandwiched between 2 RuvA tetramers; dsDNA enters through RuvA and exits via RuvB. An RuvB hexamer assembles on each DNA strand where it exits the tetramer. Each RuvB hexamer is contacted by two RuvA subunits (via domain III) on 2 adjacent RuvB subunits; this complex drives branch migration. In the full resolvosome a probable DNA-RuvA(4)-RuvB(12)-RuvC(2) complex forms which resolves the HJ.

The protein resides in the cytoplasm. Functionally, the RuvA-RuvB-RuvC complex processes Holliday junction (HJ) DNA during genetic recombination and DNA repair, while the RuvA-RuvB complex plays an important role in the rescue of blocked DNA replication forks via replication fork reversal (RFR). RuvA specifically binds to HJ cruciform DNA, conferring on it an open structure. The RuvB hexamer acts as an ATP-dependent pump, pulling dsDNA into and through the RuvAB complex. HJ branch migration allows RuvC to scan DNA until it finds its consensus sequence, where it cleaves and resolves the cruciform DNA. This chain is Holliday junction branch migration complex subunit RuvA, found in Chlorobaculum tepidum (strain ATCC 49652 / DSM 12025 / NBRC 103806 / TLS) (Chlorobium tepidum).